A 534-amino-acid chain; its full sequence is Chaperonin GroEL, chloroplastic (534 aa).

ATP is bound by residues 29–32, 86–90, Gly-414, and Asp-496; these read TLGP and DGTTT.

Belongs to the chaperonin (HSP60) family. In terms of assembly, forms a cylinder of 14 subunits composed of two heptameric rings stacked back-to-back. Interacts with the co-chaperonin GroES.

The protein resides in the plastid. It localises to the chloroplast. The enzyme catalyses ATP + H2O + a folded polypeptide = ADP + phosphate + an unfolded polypeptide.. Its function is as follows. Together with its co-chaperonin GroES, plays an essential role in assisting protein folding. The GroEL-GroES system forms a nano-cage that allows encapsulation of the non-native substrate proteins and provides a physical environment optimized to promote and accelerate protein folding. The polypeptide is Chaperonin GroEL, chloroplastic (Galdieria sulphuraria (Red alga)).